Reading from the N-terminus, the 231-residue chain is NDR1/HIN1-like protein 3 (231 aa).

The helical transmembrane segment at 47 to 67 threads the bilayer; sequence VIFNILITIAVLLGIAALIIW. N102, N135, N145, and N215 each carry an N-linked (GlcNAc...) asparagine glycan.

As to quaternary structure, may form oligomers or be a component of larger protein complex in plasma membranes. Glycosylated. In terms of tissue distribution, expressed in roots, young and senescing leaves, cauline leaves, stems and siliques.

Its subcellular location is the cell membrane. Confers resistance to Pseudomonas syringae pv. tomato DC3000 (Pst DC3000). The polypeptide is NDR1/HIN1-like protein 3 (Arabidopsis thaliana (Mouse-ear cress)).